Consider the following 178-residue polypeptide: Ribosome maturation factor RimM (178 aa).

Residues Ala-100–Leu-173 form the PRC barrel domain.

The protein belongs to the RimM family. Binds ribosomal protein uS19.

It is found in the cytoplasm. An accessory protein needed during the final step in the assembly of 30S ribosomal subunit, possibly for assembly of the head region. Essential for efficient processing of 16S rRNA. May be needed both before and after RbfA during the maturation of 16S rRNA. It has affinity for free ribosomal 30S subunits but not for 70S ribosomes. This Roseiflexus castenholzii (strain DSM 13941 / HLO8) protein is Ribosome maturation factor RimM.